We begin with the raw amino-acid sequence, 1088 residues long: MGKYNLILSEYLSFIYNSQSAVQIPIYYSSNSELENRCIEFHSKCLENSKNGLSLKKLFTEYSDVIENATLLSILSYSYDKYNAVERKLVKYAKGKPLEADLTVNELDYENNKITSELFPTAEEYTDSLMDPAILTSLSSNLNAVMFWLEKHENDVAEKLKIYKRRLDLFTIVASTVNKYGVPRHNAKYRYDYEVMKDKPYYLVTWANSSIEMLMSVFSHEDYLIARELIVLSYSNRSTLAKLVSSPMSILVALVDINGTFITNEELELEFSNKYVRAIVPDQTFDELKQMIDNMRKAGLTDIPKMIQDWLVDCSIEKFPLMAKIYSWSFHVGFRKQKMLDAALDQLKTEYTEDVDDEMYREYTMLIRDEVVKMLEEPVKHDDHLLQDSELAGLLSMSSASNGESRQLKFGRKTIFSTKKNMHVMDDMANGRYTPGIIPPVNVDKPIPLGRRDVPGRRTRIIFILPYEYFIAQHAVVEKMLIYAKHTREYAEFYSQSNQLLSYGDVTRFLSNNAMVLYTDVSQWDSSQHNTQPFRKGIIMGLDMLANMTNDARVIQTLNLYKQTQINLMDSYVQIPDGNIIKKIQYGAVASGEKQTKAANSIANLALIKTVLSRISNKHSFVTKIIRVDGDDNYAVLQFNTEVTKQMVQDVSNDVRETYARMNAKVKALVSTVGIEIAKRYIAGGKIFFRAGINLLNNEKRGQSTQWDQAAVLYSNYIVNRLRGFETDREFILTKIMQMTSVAITGSLRLFPSERVLTTNSTFKVFDSEDFIIEYGTTDDEVYIQRAFMSLSSQKSGIADEIAASSTFKNYVSKLSEQLLSSKNNIVSRGIALTEKAKLNSYAPISLEKRRAQISALLTMLQKPVTFKSSKITINDILRDIKPFFTVSEAYLPIQYQKFMPTLPDNVQYIIQCIGSRTYQIEDDGSKSAISRLISKYSVYKPSIEELYKVISLHENEIQLYLISLGIPKIDADTYVGSKIYSQDKYRILESYVYNLMSINYGCYQLFDFNSPDLEKLIRIPFKGKIPAVTFILHLYAKLEVINYAIKNGSWISLFCNYPKSEMIKLWKKMWNITSLRSPYTNANFFQD.

Positions 501-687 (LSYGDVTRFL…AKRYIAGGKI (187 aa)) constitute a RdRp catalytic domain.

The protein belongs to the reoviridae RNA-directed RNA polymerase family. Interacts with VP3 (Potential). Interacts with VP2; this interaction activates VP1. Interacts with NSP5; this interaction is probably necessary for the formation of functional virus factories. Interacts with NSP2; this interaction is weak. Requires Mg(2+) as cofactor.

It localises to the virion. It carries out the reaction RNA(n) + a ribonucleoside 5'-triphosphate = RNA(n+1) + diphosphate. RNA-directed RNA polymerase that is involved in both transcription and genome replication. Together with VP3 capping enzyme, forms an enzyme complex positioned near the channels situated at each of the five-fold vertices of the core. Following infection, the outermost layer of the virus is lost, leaving a double-layered particle (DLP) made up of the core and VP6 shell. VP1 then catalyzes the transcription of fully conservative plus-strand genomic RNAs that are extruded through the DLP's channels into the cytoplasm where they function as mRNAs for translation of viral proteins. One copy of each of the viral (+)RNAs is also recruited during core assembly, together with newly synthesized polymerase complexes and VP2. The polymerase of these novo-formed particles catalyzes the synthesis of complementary minus-strands leading to dsRNA formation. To do so, the polymerase specifically recognizes and binds 4 bases 5'-UGUG-3' in the conserved 3'-sequence of plus-strand RNA templates. VP2 presumably activates the autoinhibited VP1-RNA complex to coordinate packaging and genome replication. Once dsRNA synthesis is complete, the polymerase switches to the transcriptional mode, thus providing secondary transcription. In Homo sapiens (Human), this protein is RNA-directed RNA polymerase.